Consider the following 695-residue polypeptide: Segment polarity protein dishevelled homolog DVL-1 (695 aa).

A DIX domain is found at Met1–Glu85. The interval Ser89 to Ser235 is disordered. Residues Ser142 to Arg151 show a composition bias toward basic residues. The segment covering Asn152–Leu171 has biased composition (basic and acidic residues). Positions Ser177–Ile192 are enriched in low complexity. Position 194 is a phosphoserine (Ser194). Over residues Ser201–Arg214 the composition is skewed to low complexity. Basic residues predominate over residues Leu215–Leu228. In terms of domain architecture, PDZ spans Thr251 to Glu323. Residues Pro425–Asp499 form the DEP domain. The segment covering Ser559–Arg580 has biased composition (low complexity). Residues Ser559–Leu641 form a disordered region. Positions Ser622–Ser635 are enriched in polar residues.

Belongs to the DSH family. As to quaternary structure, interacts with CXXC4. Interacts (via PDZ domain) with TMEM88. Interacts with BRD7 and INVS. Interacts (via PDZ domain) with VANGL1 and VANGL2 (via C-terminus). Interacts (via PDZ domain) with NXN. Interacts with ARRB1; the interaction is enhanced by phosphorylation of DVL1. Interacts with CYLD. Interacts (via PDZ domain) with RYK. Self-associates (via DIX domain) and forms higher homooligomers. Interacts (via PDZ domain) with DACT1 and FZD7, where DACT1 and FZD7 compete for the same binding site. Interacts (via DEP domain) with MUSK; the interaction is direct and mediates the formation a DVL1, MUSK and PAK1 ternary complex involved in AChR clustering. Interacts with DCDC2. Interacts with FOXK2. Interacts with PKD1 (via extracellular domain). Interacts (via PDZ domain) with CCDC88C/DAPLE; competes with CCDC88C for binding to frizzled receptor FZD7 and dissociates from CCDC88C following initiation of non-canonical Wnt signaling when CCDC88C displaces DVL1 from ligand-activated FZD7. Ubiquitinated; undergoes both 'Lys-48'-linked ubiquitination, leading to its subsequent degradation by the ubiquitin-proteasome pathway, and 'Lys-63'-linked ubiquitination. The interaction with INVS is required for ubiquitination. Deubiquitinated by CYLD, which acts on 'Lys-63'-linked ubiquitin chains. As to expression, high levels are seen in the brain, testis and kidney, lower levels in the ovary, breast, muscle, liver and small intestine, and very low levels are seen in the spleen and thymus. A moderate level expression is seen in the heart.

The protein localises to the cell membrane. Its subcellular location is the cytoplasm. It is found in the cytosol. The protein resides in the cytoplasmic vesicle. Participates in Wnt signaling by binding to the cytoplasmic C-terminus of frizzled family members and transducing the Wnt signal to down-stream effectors. Plays a role both in canonical and non-canonical Wnt signaling. Plays a role in the signal transduction pathways mediated by multiple Wnt genes. Required for LEF1 activation upon WNT1 and WNT3A signaling. DVL1 and PAK1 form a ternary complex with MUSK which is important for MUSK-dependent regulation of AChR clustering during the formation of the neuromuscular junction (NMJ). This is Segment polarity protein dishevelled homolog DVL-1 (Dvl1) from Mus musculus (Mouse).